A 102-amino-acid polypeptide reads, in one-letter code: Small ribosomal subunit protein uS10 (102 aa).

The protein belongs to the universal ribosomal protein uS10 family. Part of the 30S ribosomal subunit.

Its function is as follows. Involved in the binding of tRNA to the ribosomes. In Limosilactobacillus reuteri (strain DSM 20016) (Lactobacillus reuteri), this protein is Small ribosomal subunit protein uS10.